Consider the following 286-residue polypeptide: ATP phosphoribosyltransferase (286 aa).

The protein belongs to the ATP phosphoribosyltransferase family. Long subfamily. The cofactor is Mg(2+).

The protein localises to the cytoplasm. The catalysed reaction is 1-(5-phospho-beta-D-ribosyl)-ATP + diphosphate = 5-phospho-alpha-D-ribose 1-diphosphate + ATP. The protein operates within amino-acid biosynthesis; L-histidine biosynthesis; L-histidine from 5-phospho-alpha-D-ribose 1-diphosphate: step 1/9. With respect to regulation, feedback inhibited by histidine. Catalyzes the condensation of ATP and 5-phosphoribose 1-diphosphate to form N'-(5'-phosphoribosyl)-ATP (PR-ATP). Has a crucial role in the pathway because the rate of histidine biosynthesis seems to be controlled primarily by regulation of HisG enzymatic activity. This chain is ATP phosphoribosyltransferase, found in Cytophaga hutchinsonii (strain ATCC 33406 / DSM 1761 / CIP 103989 / NBRC 15051 / NCIMB 9469 / D465).